A 317-amino-acid chain; its full sequence is Apolipoprotein E (317 aa).

A signal peptide spans 1 to 18 (MKVLWAALLVTFLAGCQA). 8 consecutive repeat copies span residues 80-101 (ALMD…EQLT), 102-123 (PVAE…ARLG), 124-145 (ADME…AMLG), 146-167 (QSTE…KRLL), 168-189 (RDAD…EGAE), 190-211 (RGVS…VRAA), 212-233 (TVGS…ERLR), and 234-255 (ARME…EQVA). The 8 X 22 AA approximate tandem repeats stretch occupies residues 80–255 (ALMDETMKEL…RLDEVKEQVA (176 aa)). The residue at position 143 (M143) is a Methionine sulfoxide. A Phosphoserine modification is found at S147. Positions 158-168 (HLRKLRKRLLR) are LDL and other lipoprotein receptors binding. 162 to 165 (LRKR) contacts heparin. The tract at residues 210–290 (AATVGSLAGQ…SWFEPLVEDM (81 aa)) is lipid-binding and lipoprotein association. 229–236 (GERLRARM) provides a ligand contact to heparin. The segment at 266-317 (QQIRLQAEAFQARLKSWFEPLVEDMQRQWAGLVEKVQAAMGTSAAPVPSDNH) is homooligomerization. The tract at residues 278 to 290 (RLKSWFEPLVEDM) is specificity for association with VLDL.

It belongs to the apolipoprotein A1/A4/E family. In terms of assembly, homotetramer. May interact with ABCA1; functionally associated with ABCA1 in the biogenesis of HDLs. May interact with APP/A4 amyloid-beta peptide; the interaction is extremely stable in vitro but its physiological significance is unclear. May interact with MAPT. May interact with MAP2. In the cerebrospinal fluid, interacts with secreted SORL1. Interacts with PMEL; this allows the loading of PMEL luminal fragment on ILVs to induce fibril nucleation. APOE exists as multiple glycosylated and sialylated glycoforms within cells and in plasma. The extent of glycosylation and sialylation are tissue and context specific. In terms of processing, glycated in plasma VLDL. Post-translationally, phosphorylated by FAM20C in the extracellular medium.

Its subcellular location is the secreted. It is found in the extracellular space. The protein resides in the extracellular matrix. The protein localises to the extracellular vesicle. It localises to the endosome. Its subcellular location is the multivesicular body. In terms of biological role, APOE is an apolipoprotein, a protein associating with lipid particles, that mainly functions in lipoprotein-mediated lipid transport between organs via the plasma and interstitial fluids. APOE is a core component of plasma lipoproteins and is involved in their production, conversion and clearance. Apolipoproteins are amphipathic molecules that interact both with lipids of the lipoprotein particle core and the aqueous environment of the plasma. As such, APOE associates with chylomicrons, chylomicron remnants, very low density lipoproteins (VLDL) and intermediate density lipoproteins (IDL) but shows a preferential binding to high-density lipoproteins (HDL). It also binds a wide range of cellular receptors including the LDL receptor/LDLR, the LDL receptor-related proteins LRP1, LRP2 and LRP8 and the very low-density lipoprotein receptor/VLDLR that mediate the cellular uptake of the APOE-containing lipoprotein particles. Finally, APOE also has a heparin-binding activity and binds heparan-sulfate proteoglycans on the surface of cells, a property that supports the capture and the receptor-mediated uptake of APOE-containing lipoproteins by cells. A main function of APOE is to mediate lipoprotein clearance through the uptake of chylomicrons, VLDLs, and HDLs by hepatocytes. APOE is also involved in the biosynthesis by the liver of VLDLs as well as their uptake by peripheral tissues ensuring the delivery of triglycerides and energy storage in muscle, heart and adipose tissues. By participating in the lipoprotein-mediated distribution of lipids among tissues, APOE plays a critical role in plasma and tissues lipid homeostasis. APOE is also involved in two steps of reverse cholesterol transport, the HDLs-mediated transport of cholesterol from peripheral tissues to the liver, and thereby plays an important role in cholesterol homeostasis. First, it is functionally associated with ABCA1 in the biogenesis of HDLs in tissues. Second, it is enriched in circulating HDLs and mediates their uptake by hepatocytes. APOE also plays an important role in lipid transport in the central nervous system, regulating neuron survival and sprouting. This chain is Apolipoprotein E (APOE), found in Pan troglodytes (Chimpanzee).